The sequence spans 415 residues: von Willebrand factor A domain-containing protein 1 (415 aa).

Positions 1-18 (MLFWTVLSMALSLRLALA) are cleaved as a signal peptide. Positions 34-213 (DLLFLLDSSA…ELRGAIIDAM (180 aa)) constitute a VWFA domain. 3 positions are modified to phosphoserine: serine 74, serine 80, and serine 93. 2 Fibronectin type-III domains span residues 214–305 (QPHQ…LQEE) and 307–405 (GPER…VPQA). Residue asparagine 264 is glycosylated (N-linked (GlcNAc...) asparagine). Cysteine 369 and cysteine 393 are disulfide-bonded.

Homodimer or homomultimer; disulfide-linked. Interacts with HSPG2. Post-translationally, N-glycosylated.

It is found in the secreted. Its subcellular location is the extracellular space. The protein resides in the extracellular matrix. The protein localises to the basement membrane. Its function is as follows. Promotes matrix assembly. Involved in the organization of skeletal muscles and in the formation of neuromuscular junctions. The protein is von Willebrand factor A domain-containing protein 1 (Vwa1) of Rattus norvegicus (Rat).